Consider the following 349-residue polypeptide: Methylthioribose-1-phosphate isomerase (349 aa).

Residues R49–A51, R92, and Q199 contribute to the substrate site. D240 acts as the Proton donor in catalysis. N250–K251 contributes to the substrate binding site.

Belongs to the eIF-2B alpha/beta/delta subunits family. MtnA subfamily.

The enzyme catalyses 5-(methylsulfanyl)-alpha-D-ribose 1-phosphate = 5-(methylsulfanyl)-D-ribulose 1-phosphate. Its pathway is amino-acid biosynthesis; L-methionine biosynthesis via salvage pathway; L-methionine from S-methyl-5-thio-alpha-D-ribose 1-phosphate: step 1/6. Its function is as follows. Catalyzes the interconversion of methylthioribose-1-phosphate (MTR-1-P) into methylthioribulose-1-phosphate (MTRu-1-P). The protein is Methylthioribose-1-phosphate isomerase of Syntrophobacter fumaroxidans (strain DSM 10017 / MPOB).